Here is a 726-residue protein sequence, read N- to C-terminus: Ribonuclease R (726 aa).

Residues 262 to 590 enclose the RNB domain; the sequence is RIDLRHLPFF…LVHRVIKNLL (329 aa). An S1 motif domain is found at 642–723; that stretch reads GDVLTGVISN…NERKIELSLY (82 aa).

Belongs to the RNR ribonuclease family. RNase R subfamily. Monomer.

The protein resides in the cytoplasm. It catalyses the reaction Exonucleolytic cleavage in the 3'- to 5'-direction to yield nucleoside 5'-phosphates.. Functionally, 3'-5' exoribonuclease that releases 5'-nucleoside monophosphates and is involved in maturation of structured RNAs. In Buchnera aphidicola subsp. Schizaphis graminum (strain Sg), this protein is Ribonuclease R.